A 248-amino-acid chain; its full sequence is Anamorsin homolog (248 aa).

The segment at 4–129 (FKGLQKSLYI…ETGSSARLSF (126 aa)) is N-terminal SAM-like domain. A linker region spans residues 130–161 (AKKNANAANVWKISGDDEELIDEEELLDEEDK). Cysteine 172, cysteine 181, cysteine 184, and cysteine 186 together coordinate [2Fe-2S] cluster. The tract at residues 172 to 186 (CSTTGKRKACKNCSC) is fe-S binding site A. [4Fe-4S] cluster is bound by residues cysteine 209, cysteine 212, cysteine 220, and cysteine 223. Short sequence motifs (cx2C motif) lie at residues 209–212 (CGNC) and 220–223 (CSTC). A fe-S binding site B region spans residues 209-223 (CGNCYLGDAFRCSTC).

Belongs to the anamorsin family. As to quaternary structure, monomer. It depends on [2Fe-2S] cluster as a cofactor. [4Fe-4S] cluster serves as cofactor.

It localises to the cytoplasm. Its subcellular location is the mitochondrion intermembrane space. In terms of biological role, component of the cytosolic iron-sulfur (Fe-S) protein assembly (CIA) machinery. Required for the maturation of extramitochondrial Fe-S proteins. Part of an electron transfer chain functioning in an early step of cytosolic Fe-S biogenesis, facilitating the de novo assembly of a [4Fe-4S] cluster on the cytosolic Fe-S scaffold complex. Electrons are transferred from NADPH via a FAD- and FMN-containing diflavin oxidoreductase. Together with the diflavin oxidoreductase, also required for the assembly of the diferric tyrosyl radical cofactor of ribonucleotide reductase (RNR), probably by providing electrons for reduction during radical cofactor maturation in the catalytic small subunit. The sequence is that of Anamorsin homolog from Drosophila sechellia (Fruit fly).